The chain runs to 147 residues: Deoxyuridine 5'-triphosphate nucleotidohydrolase (147 aa).

Residues arginine 67–glycine 69, asparagine 80, and leucine 84–aspartate 86 each bind substrate.

This sequence belongs to the dUTPase family. Mg(2+) serves as cofactor.

The catalysed reaction is dUTP + H2O = dUMP + diphosphate + H(+). Its pathway is pyrimidine metabolism; dUMP biosynthesis; dUMP from dCTP (dUTP route): step 2/2. Its function is as follows. This enzyme is involved in nucleotide metabolism: it produces dUMP, the immediate precursor of thymidine nucleotides and it decreases the intracellular concentration of dUTP so that uracil cannot be incorporated into DNA. This Gloeobacter violaceus (strain ATCC 29082 / PCC 7421) protein is Deoxyuridine 5'-triphosphate nucleotidohydrolase.